Here is a 2376-residue protein sequence, read N- to C-terminus: Serine/threonine-protein kinase WNK1 (2376 aa).

Disordered stretches follow at residues 1–78 and 93–201; these read MSGG…EHRF and ELPG…QQDD. Low complexity-rich tracts occupy residues 10-19 and 40-49; these read SSPPGSLFLS and GAAAADAGAG. 2 positions are modified to phosphoserine: Ser15 and Ser19. Residues 50-66 show a composition bias toward basic and acidic residues; the sequence is RTEEYRRRRHTMDKDSR. A Phosphothreonine modification is found at Thr60. The segment covering 125-158 has biased composition (low complexity); the sequence is TPAVAHVAQQPPAAATPGEPAAAVPAAASAPGSA. Position 172 is a phosphoserine (Ser172). Residues 219-477 form the Protein kinase domain; the sequence is LKFDIEIGRG…IKDLLNHAFF (259 aa). Ser229 contributes to the ATP binding site. Chloride contacts are provided by Phe281 and Leu297. Residues 299–302 and Lys349 each bind ATP; that span reads TELM. Catalysis depends on Asp366, which acts as the Proton acceptor. Chloride contacts are provided by Leu367 and Leu369. Phosphoserine; by autocatalysis is present on residues Ser376 and Ser380. The autoinhibitory domain stretch occupies residues 486–553; sequence ELAEEDDGEK…VCEGDHKTMA (68 aa). Positions 571–586 are enriched in basic and acidic residues; sequence QLVREEQEKRKQEESS. 3 disordered regions span residues 571 to 641, 701 to 799, and 1026 to 1118; these read QLVR…QLQY, AQPH…PVPT, and TTSS…SRPK. Low complexity-rich tracts occupy residues 587–601 and 614–624; these read LKQQGEQQSSASQAG and AAATTSASVST. An interaction with KLHL3 region spans residues 627–637; that stretch reads EPEEPEADQHQ. Residues 708-752 are compositionally biased toward low complexity; the sequence is PPSSMAQGQSQGQPSSSSLTGIPSSQPVQHSQQQQGVQQTAPSQQ. Residues 753–766 are compositionally biased toward polar residues; that stretch reads TVQYSLPQTSAPSE. Residues 1045–1057 are compositionally biased toward pro residues; sequence PPEPVPAAPPQPT. Residues 1079–1089 are compositionally biased toward polar residues; the sequence is SDGNENVPSSS. Positions 1097-1118 are enriched in basic residues; it reads IKRHYRKSVRSRSRHEKTSRPK. The RFXV motif 1 motif lies at 1257–1260; the sequence is RFIV. Residue Ser1261 is modified to Phosphoserine. 2 disordered regions span residues 1459–1478 and 1734–1770; these read STAAPGAKPPPVSSQQVSGS and STIPAVKPGTAPSKPPSTKPPVLPLGTELPAGTPPSE. Over residues 1746-1756 the composition is skewed to pro residues; sequence SKPPSTKPPVL. The RFXV motif 2 motif lies at 1853–1856; the sequence is RFQV. Positions 1862 to 1878 are enriched in basic and acidic residues; it reads DTQKEGKNKSEDVKSVH. Residues 1862–1942 form a disordered region; the sequence is DTQKEGKNKS…QPTKVGRFQV (81 aa). Positions 1881–1899 are enriched in low complexity; sequence SSTSESSVLSSSSPESTLV. Short sequence motifs (RFXV motif) lie at residues 1939–1942 and 1951–1954; these read RFQV and RFSV. Residues Ser1972, Ser1996, Ser2005, Ser2006, Ser2021, Ser2023, and Ser2026 each carry the phosphoserine modification. Disordered regions lie at residues 1991-2033 and 2110-2239; these read EKPE…LCSK and AAAP…RKGT. Over residues 2116–2128 the composition is skewed to basic residues; the sequence is GRRRRPTKSKGSK. Over residues 2129–2141 the composition is skewed to low complexity; that stretch reads SSRSSSLGNKSPG. 2 stretches are compositionally biased toward polar residues: residues 2146-2161 and 2169-2193; these read LSGQSTATVLHPQQTL and ETGQNQLLQPLKPSPSSDNLYSAFT. A compositionally biased stretch (low complexity) spans 2207–2223; that stretch reads GQGTSSTNTVGGTVSSQ. Over residues 2224 to 2238 the composition is skewed to polar residues; that stretch reads AAQAQPPTMTSSRKG. The amphipathic alpha-helix stretch occupies residues 2235–2255; it reads SRKGTFTDDLHKLVDNWARDA. Residues Ser2264, Ser2280, Ser2364, and Ser2366 each carry the phosphoserine modification.

It belongs to the protein kinase superfamily. Ser/Thr protein kinase family. WNK subfamily. In terms of assembly, interacts with WNK3. Interacts with WNK4; inhibiting the activity of WNK4. Interacts with SGK1; promoting its activation. Associates with the mTORC2 complex. Interacts with UVRAG. Interacts (via amphipathic alpha-helix region) with EMC2; promoting the ER membrane protein complex assembly. Mg(2+) is required as a cofactor. Post-translationally, autophosphorylated at Ser-376 and Ser-380, promoting its activity. Autophosphorylation at Ser-380 is inhibited by intracellular calcium. Phosphorylation at Thr-60 increases ability to activate SGK1. In terms of processing, ubiquitinated by the BCR(KLHL3) complex, leading to its degradation. Also ubiquitinated by the BCR(KLHL2) complex.

It is found in the cytoplasm. The protein resides in the nucleus. It localises to the cytoskeleton. Its subcellular location is the spindle. It catalyses the reaction L-seryl-[protein] + ATP = O-phospho-L-seryl-[protein] + ADP + H(+). It carries out the reaction L-threonyl-[protein] + ATP = O-phospho-L-threonyl-[protein] + ADP + H(+). With respect to regulation, activated in response to hyperosmotic stress: cell shrinkage promotes formation of a membraneless compartment that concentrates WNK1 with its substrates, OXSR1/OSR1 and STK39/SPAK. Activation requires autophosphorylation of Ser-380 and, to a lower extent, Ser-376. Autophosphorylation and subsequent activation is inhibited by increases in intracellular ionic strength: Cl(-) potently inhibits WNK1 kinase activity via direct binding. Also inhibited by K(+) ions. In terms of biological role, serine/threonine-protein kinase component of the WNK1-SPAK/OSR1 kinase cascade, which acts as a key regulator of blood pressure and regulatory volume increase by promoting ion influx. WNK1 mediates regulatory volume increase in response to hyperosmotic stress by acting as a molecular crowding sensor, which senses cell shrinkage and mediates formation of a membraneless compartment by undergoing liquid-liquid phase separation. The membraneless compartment concentrates WNK1 with its substrates, OXSR1/OSR1 and STK39/SPAK, promoting WNK1-dependent phosphorylation and activation of downstream kinases OXSR1/OSR1 and STK39/SPAK. Following activation, OXSR1/OSR1 and STK39/SPAK catalyze phosphorylation of ion cotransporters SLC12A1/NKCC2, SLC12A2/NKCC1, SLC12A5/KCC2 and SLC12A6/KCC3, regulating their activity. Phosphorylation of Na-K-Cl cotransporters SLC12A2/NKCC1 and SLC12A2/NKCC1 promote their activation and ion influx; simultaneously, phosphorylation of K-Cl cotransporters SLC12A5/KCC2 and SLC12A6/KCC3 inhibit their activity, blocking ion efflux. Also acts as a regulator of angiogenesis in endothelial cells via activation of OXSR1/OSR1 and STK39/SPAK: activation of OXSR1/OSR1 regulates chemotaxis and invasion, while STK39/SPAK regulates endothelial cell proliferation. Also acts independently of the WNK1-SPAK/OSR1 kinase cascade by catalyzing phosphorylation of other substrates, such as SYT2, PCF11 and NEDD4L. Mediates phosphorylation of SYT2, regulating SYT2 association with phospholipids and membrane-binding. Regulates mRNA export in the nucleus by mediating phosphorylation of PCF11, thereby decreasing the association between PCF11 and POLR2A/RNA polymerase II and promoting mRNA export to the cytoplasm. Acts as a negative regulator of autophagy. Required for the abscission step during mitosis, independently of the WNK1-SPAK/OSR1 kinase cascade. May also play a role in actin cytoskeletal reorganization. Also acts as a scaffold protein independently of its protein kinase activity: negatively regulates cell membrane localization of various transporters and channels, such as SLC4A4, SLC26A6, SLC26A9, TRPV4 and CFTR. Involved in the regulation of epithelial Na(+) channel (ENaC) by promoting activation of SGK1 in a kinase-independent manner: probably acts as a scaffold protein that promotes the recruitment of SGK1 to the mTORC2 complex in response to chloride, leading to mTORC2-dependent phosphorylation and activation of SGK1. Acts as an assembly factor for the ER membrane protein complex independently of its protein kinase activity: associates with EMC2 in the cytoplasm via its amphipathic alpha-helix, and prevents EMC2 ubiquitination and subsequent degradation, thereby promoting EMC2 stabilization. This chain is Serine/threonine-protein kinase WNK1, found in Sus scrofa (Pig).